Consider the following 758-residue polypeptide: Probable serine/threonine-protein kinase HAL5-like (758 aa).

Disordered stretches follow at residues 1–170 and 189–252; these read MGTV…SADD and IDNA…HRGR. Positions 22–57 are enriched in polar residues; sequence RSISGSIKSLFKPSSVQNSTPTVSPHESSPPLGNSD. Over residues 58 to 69 the composition is skewed to basic and acidic residues; the sequence is NLKKLVDTKRAE. Low complexity predominate over residues 129 to 153; it reads SSPRQSSSTNDRSSITSATSSVTSA. A compositionally biased stretch (basic and acidic residues) spans 216-226; the sequence is DKNFESSEYEI. Polar residues predominate over residues 227–247; the sequence is RSNSLSRIHSTPQNESPTVNN. In terms of domain architecture, Protein kinase spans 442 to 744; the sequence is KSMGVVLGHG…IDQLLQSPWM (303 aa). ATP is bound by residues 448 to 456 and Lys485; that span reads LGHGAYGVV. The Proton acceptor role is filled by Asp595.

This sequence belongs to the protein kinase superfamily. CAMK Ser/Thr protein kinase family. NPR/HAL subfamily. HAL5 sub-subfamily.

The enzyme catalyses L-seryl-[protein] + ATP = O-phospho-L-seryl-[protein] + ADP + H(+). It catalyses the reaction L-threonyl-[protein] + ATP = O-phospho-L-threonyl-[protein] + ADP + H(+). In Vanderwaltozyma polyspora (strain ATCC 22028 / DSM 70294 / BCRC 21397 / CBS 2163 / NBRC 10782 / NRRL Y-8283 / UCD 57-17) (Kluyveromyces polysporus), this protein is Probable serine/threonine-protein kinase HAL5-like.